The following is a 279-amino-acid chain: Fatty acid desaturase 4-like 2, chloroplastic (279 aa).

The N-terminal 30 residues, 1-30 (MATSLQTKYTLNPITNNIPRSHRPSFLRVT), are a transit peptide targeting the chloroplast. Helical transmembrane passes span 68–90 (LWVAAGCTTVFVSFSKSIIGAFG), 98–118 (SLAGFAGYILADLGSGVYHWA), and 178–198 (VVHGFVSMFAFCVLFCQLFHA).

The protein belongs to the fatty acid desaturase CarF family.

It is found in the plastid. The protein localises to the chloroplast membrane. It participates in lipid metabolism; fatty acid metabolism. Functionally, fatty acid desaturase involved in the production of chloroplast-specific phosphatidylglycerol molecular species. Catalyzes the formation of a trans double bond introduced close to the carboxyl group of palmitic acid, which is specifically esterified to the sn-2 glyceryl carbon of phosphatidylglycerol. This Arabidopsis thaliana (Mouse-ear cress) protein is Fatty acid desaturase 4-like 2, chloroplastic (FAD4L2).